The sequence spans 511 residues: Glutamyl-tRNA(Gln) amidotransferase subunit A, mitochondrial (511 aa).

Catalysis depends on charge relay system residues lysine 72 and serine 149. Serine 173 acts as the Acyl-ester intermediate in catalysis.

This sequence belongs to the amidase family. GatA subfamily. In terms of assembly, subunit of the heterotrimeric GatCAB amidotransferase (AdT) complex, composed of A, B and C subunits.

It localises to the mitochondrion. It catalyses the reaction L-glutamyl-tRNA(Gln) + L-glutamine + ATP + H2O = L-glutaminyl-tRNA(Gln) + L-glutamate + ADP + phosphate + H(+). Allows the formation of correctly charged Gln-tRNA(Gln) through the transamidation of misacylated Glu-tRNA(Gln) in the mitochondria. The reaction takes place in the presence of glutamine and ATP through an activated gamma-phospho-Glu-tRNA(Gln). The polypeptide is Glutamyl-tRNA(Gln) amidotransferase subunit A, mitochondrial (Fusarium vanettenii (strain ATCC MYA-4622 / CBS 123669 / FGSC 9596 / NRRL 45880 / 77-13-4) (Fusarium solani subsp. pisi)).